The sequence spans 136 residues: Holo-[acyl-carrier-protein] synthase (136 aa).

Mg(2+) is bound by residues Asp-8 and Glu-62.

It belongs to the P-Pant transferase superfamily. AcpS family. Mg(2+) serves as cofactor.

It localises to the cytoplasm. It catalyses the reaction apo-[ACP] + CoA = holo-[ACP] + adenosine 3',5'-bisphosphate + H(+). In terms of biological role, transfers the 4'-phosphopantetheine moiety from coenzyme A to a Ser of acyl-carrier-protein. This is Holo-[acyl-carrier-protein] synthase from Polynucleobacter necessarius subsp. necessarius (strain STIR1).